Here is a 719-residue protein sequence, read N- to C-terminus: Protein STRUBBELIG-RECEPTOR FAMILY 6 (719 aa).

Residues 1–29 (MRENWAVVALFTLCIVGFELRFIHGATDA) form the signal peptide. Residues 30–293 (SDTSALNTLF…SKKSGIGAGA (264 aa)) lie on the Extracellular side of the membrane. LRR repeat units lie at residues 97–118 (SLTE…QFPP), 119–140 (NLQR…SLSQ), 143–164 (PLKY…DFSK), 167–190 (SLTT…SSLT), 191–213 (SLKS…AGLP), and 214–234 (LETL…SLKG). Positions 242-287 (NSFNTGPAPPPPPGTPPIRGSPSRKSGGRESRSSDESTRNGDSKKS) are disordered. Residues 248 to 257 (PAPPPPPGTP) show a composition bias toward pro residues. A compositionally biased stretch (basic and acidic residues) spans 268-286 (GGRESRSSDESTRNGDSKK). The chain crosses the membrane as a helical span at residues 294 to 314 (IAGIIISLLVVTALLVAFFLF). Residues 315 to 719 (RRKKSKRSSP…GSADTTSDYM (405 aa)) lie on the Cytoplasmic side of the membrane. Disordered regions lie at residues 322–355 (SSPM…SSVE) and 364–383 (SINL…DEDS). Residues 332–354 (NQPFTLASNDFHENNSIQSSSSV) are compositionally biased toward polar residues. A Phosphoserine modification is found at Ser377. Residues 416–690 (FSVDNLLGEG…SEVVQALVVL (275 aa)) form the Protein kinase domain. ATP is bound by residues 422 to 430 (LGEGTFGRV) and Lys444. The interval 700–719 (TVGVDPSQRAGSADTTSDYM) is disordered. Polar residues predominate over residues 708–719 (RAGSADTTSDYM).

This sequence belongs to the protein kinase superfamily. Ser/Thr protein kinase family. In terms of tissue distribution, expressed in seedlings, roots, stems, leaves, flowers and siliques.

It localises to the membrane. This Arabidopsis thaliana (Mouse-ear cress) protein is Protein STRUBBELIG-RECEPTOR FAMILY 6 (SRF6).